A 1202-amino-acid polypeptide reads, in one-letter code: Phospholipid-transporting ATPase 10 (1202 aa).

Over M1–F73 the chain is Cytoplasmic. A helical membrane pass occupies residues P74–L95. Residues S96 to D99 lie on the Extracellular side of the membrane. A helical transmembrane segment spans residues L100 to K122. Residues E123 to I305 lie on the Cytoplasmic side of the membrane. The helical transmembrane segment at I306–E327 threads the bilayer. At T328–H364 the chain is on the extracellular side. A helical transmembrane segment spans residues F365 to V382. At S383 to A920 the chain is on the cytoplasmic side. D430 acts as the 4-aspartylphosphate intermediate in catalysis. The Mg(2+) site is built by D865 and D869. A helical membrane pass occupies residues S921–Y940. Residues E941 to D954 lie on the Extracellular side of the membrane. A helical transmembrane segment spans residues W955–V974. Over F975–R1004 the chain is Cytoplasmic. A helical transmembrane segment spans residues I1005–L1027. The Extracellular segment spans residues K1028 to G1040. Residues R1041–S1063 traverse the membrane as a helical segment. Over I1064–W1069 the chain is Cytoplasmic. A helical membrane pass occupies residues V1070–G1090. The Extracellular portion of the chain corresponds to A1091 to A1107. Residues L1108–Y1132 traverse the membrane as a helical segment. The Cytoplasmic segment spans residues K1133–V1202.

The protein belongs to the cation transport ATPase (P-type) (TC 3.A.3) family. Type IV subfamily.

It is found in the cell membrane. It carries out the reaction ATP + H2O + phospholipidSide 1 = ADP + phosphate + phospholipidSide 2.. In terms of biological role, involved in transport of phospholipids. In Arabidopsis thaliana (Mouse-ear cress), this protein is Phospholipid-transporting ATPase 10.